A 927-amino-acid polypeptide reads, in one-letter code: Clumping factor A (927 aa).

The signal sequence occupies residues 1 to 39; it reads MNMKKKEKHAIRKKSIGVASVLVGTLIGFGLLSSKEADA. Positions 9–20 match the YSIRK-G/S signaling motif motif; sequence HAIRKKSIGVAS. Disordered regions lie at residues 34–200 and 529–898; these read SKEA…SNKD and FNNG…SEDE. The tract at residues 40–542 is ligand binding A region; it reads SENSVTQSDS…SGSGDGIDKP (503 aa). Residues 47–65 show a composition bias toward low complexity; sequence SDSASNESKSNDSSSVSAA. Polar residues predominate over residues 71-105; sequence TNVSDTKTSSNTNNGETSVAQNPAQQETTQSSSTN. Low complexity-rich tracts occupy residues 106 to 132 and 143 to 162; these read ATTE…ATTQ and NQTS…SVNS. A compositionally biased stretch (polar residues) spans 163–200; it reads PQNSTNAENVSTTQDTSTEATPSNNESAPQSTDASNKD. The segment covering 547 to 565 has biased composition (acidic residues); it reads QPDEPGEIEPIPEDSDSDP. Residues 566–598 show a composition bias toward low complexity; it reads GSDSGSDSNSDSGSDSGSDSTSDSGSDSASDSD. The span at 599–855 shows a compositional bias: acidic residues; sequence SASDSDSASD…DSDSESDSNS (257 aa). Low complexity predominate over residues 856–867; sequence DSESVSNNNVVP. Residues 881 to 890 are compositionally biased toward basic and acidic residues; that stretch reads NEAKDSKEPL. Residues 890 to 894 carry the LPXTG sorting signal motif; that stretch reads LPDTG. A Pentaglycyl murein peptidoglycan amidated threonine modification is found at T893. Residues 894-927 constitute a propeptide, removed by sortase; sequence GSEDEANTSLIWGLLASIGSLLLFRRKKENKDKK.

Belongs to the serine-aspartate repeat-containing protein (SDr) family.

The protein localises to the secreted. The protein resides in the cell wall. Its function is as follows. Cell surface-associated protein implicated in virulence. Promotes bacterial attachment exclusively to the gamma-chain of human fibrinogen. Induces formation of bacterial clumps, which diminish the ability of group IIA phospholipase A2 to cause bacterial phospholipid hydrolysis and killing. Significantly decreases macrophage phagocytosis possibly thanks to the clumps, clumped bacteria being too large to be phagocytosed. Dominant factor responsible for human platelet aggregation, which may be an important mechanism for initiating infective endocarditis. Enhances spleen cell proliferative response in vitro, contributing significantly to the immunostimulatory activity of S.aureus. The sequence is that of Clumping factor A (clfA) from Staphylococcus aureus (strain NCTC 8325 / PS 47).